A 462-amino-acid chain; its full sequence is tRNA modification GTPase MnmE (462 aa).

(6S)-5-formyl-5,6,7,8-tetrahydrofolate contacts are provided by R26, E91, and R130. The region spanning 228–382 (GLSTAKIGRP…IEERINDIFF (155 aa)) is the TrmE-type G domain. N238 lines the K(+) pocket. GTP-binding positions include 238 to 243 (NVGKSQ), 257 to 263 (TDIEGTT), and 282 to 285 (DTAG). S242 contacts Mg(2+). K(+) contacts are provided by T257, I259, and T262. T263 serves as a coordination point for Mg(2+). Position 462 (K462) interacts with (6S)-5-formyl-5,6,7,8-tetrahydrofolate.

The protein belongs to the TRAFAC class TrmE-Era-EngA-EngB-Septin-like GTPase superfamily. TrmE GTPase family. As to quaternary structure, homodimer. Heterotetramer of two MnmE and two MnmG subunits. It depends on K(+) as a cofactor.

It is found in the cytoplasm. Functionally, exhibits a very high intrinsic GTPase hydrolysis rate. Involved in the addition of a carboxymethylaminomethyl (cmnm) group at the wobble position (U34) of certain tRNAs, forming tRNA-cmnm(5)s(2)U34. The protein is tRNA modification GTPase MnmE of Streptococcus agalactiae.